The primary structure comprises 659 residues: MQGSSLWLSLTFRSARVLSRARFFEWQSPGLPNTAAMENGTGPYGEERPREVQETTVTEGAAKIAFPSANEVFYNPVQEFNRDLTCAVITEFARIQLGAKGIQIKVPGEKDTQKVVVDLSEQEEEKVELKESENLASGDQPRTAAVGEICEEGLHVLEGLAASGLRSIRFALEVPGLRSVVANDASTRAVDLIRRNVQLNDVAHLVQPSQADARMLMYQHQRVSERFDVIDLDPYGSPATFLDAAVQAVSEGGLLCVTCTDMAVLAGNSGETCYSKYGAMALKSRACHEMALRIVLHSLDLRANCYQRFVVPLLSISADFYVRVFVRVFTGQAKVKASASKQALVFQCVGCGAFHLQRLGKASGVPSGRAKFSAACGPPVTPECEHCGQRHQLGGPMWAEPIHDLDFVGRVLEAVSANPGRFHTSERIRGVLSVITEELPDVPLYYTLDQLSSTIHCNTPSLLQLRSALLHADFRVSLSHACKNAVKTDAPASALWDIMRCWEKECPVKRERLSETSPAFRILSVEPRLQANFTIREDANPSSRQRGLKRFQANPEANWGPRPRARPGGKAADEAMEERRRLLQNKRKEPPEDVAQRAARLKTFPCKRFKEGTCQRGDQCCYSHSPPTPRVSADAAPDCPETSNQTPPGPGAAAGPGID.

The N-terminal 23 residues, 1 to 23 (MQGSSLWLSLTFRSARVLSRARF), are a transit peptide targeting the mitochondrion. The Trm1 methyltransferase domain maps to 55-499 (TTVTEGAAKI…APASALWDIM (445 aa)). Arg82 is a binding site for S-adenosyl-L-methionine. Residue Ser120 is modified to Phosphoserine. S-adenosyl-L-methionine contacts are provided by Arg166 and Asp184. 4 residues coordinate Zn(2+): Cys348, Cys351, Cys384, and Cys387. Ser517 carries the phosphoserine modification. 2 disordered regions span residues 537–578 (EDAN…AMEE) and 616–659 (RGDQ…PGID). The Nuclear localization signal motif lies at 543–575 (SRQRGLKRFQANPEANWGPRPRARPGGKAADEA). A C3H1-type zinc finger spans residues 600 to 627 (RLKTFPCKRFKEGTCQRGDQCCYSHSPP). Ser625 is subject to Phosphoserine. Phosphothreonine occurs at positions 628 and 646.

This sequence belongs to the class I-like SAM-binding methyltransferase superfamily. Trm1 family. Post-translationally, (Microbial infection) Cleaved between Gln-530 and Ala-531 by the 3C-like proteinase nsp5 from human coronavirus SARS-CoV-2, leading to its inactivation.

The protein localises to the mitochondrion. The protein resides in the nucleus. Its subcellular location is the cytoplasm. The catalysed reaction is guanosine(26) in tRNA + 2 S-adenosyl-L-methionine = N(2)-dimethylguanosine(26) in tRNA + 2 S-adenosyl-L-homocysteine + 2 H(+). Dimethylates a single guanine residue at position 26 of most nuclear- and mitochondrial-encoded tRNAs using S-adenosyl-L-methionine as donor of the methyl groups. tRNA guanine(26)-dimethylation is required for redox homeostasis and ensure proper cellular proliferation and oxidative stress survival. This chain is tRNA (guanine(26)-N(2))-dimethyltransferase, found in Homo sapiens (Human).